Here is a 229-residue protein sequence, read N- to C-terminus: Uracil-DNA glycosylase (229 aa).

D64 (proton acceptor) is an active-site residue.

This sequence belongs to the uracil-DNA glycosylase (UDG) superfamily. UNG family.

Its subcellular location is the cytoplasm. It carries out the reaction Hydrolyzes single-stranded DNA or mismatched double-stranded DNA and polynucleotides, releasing free uracil.. Excises uracil residues from the DNA which can arise as a result of misincorporation of dUMP residues by DNA polymerase or due to deamination of cytosine. This Shigella flexneri serotype 5b (strain 8401) protein is Uracil-DNA glycosylase.